The chain runs to 663 residues: General transcription and DNA repair factor IIH subunit tcf-29 (663 aa).

BSD domains lie at 147 to 206 (WFED…RAYA) and 227 to 278 (ENGE…LSKK). 2 disordered regions span residues 452-491 (DSDG…QHVG) and 513-535 (HLTT…EERP). Positions 453-465 (SDGRGGIDLHRSI) are enriched in basic and acidic residues. Positions 515–528 (TTTTTHGGSHTTTT) are enriched in low complexity.

Belongs to the TFB1 family. In terms of assembly, component of the 7-subunit TFIIH core complex composed of XPB/rad25, XPD/dnr-10, tcf-30/SSL1, tcf-29/TFB1, tcf-11/TFB2, tcf-14/TFB4 and rtf-1/TFB5, which is active in NER. The core complex associates with the 3-subunit CTD-kinase module TFIIK composed of div-66/cyclin H, prk-3/KIN28 and rtf-2/TFB3 to form the 10-subunit holoenzyme (holo-TFIIH) active in transcription.

The protein localises to the nucleus. Its function is as follows. Component of the general transcription and DNA repair factor IIH (TFIIH) core complex, which is involved in general and transcription-coupled nucleotide excision repair (NER) of damaged DNA and, when complexed to TFIIK, in RNA transcription by RNA polymerase II. In NER, TFIIH acts by opening DNA around the lesion to allow the excision of the damaged oligonucleotide and its replacement by a new DNA fragment. In transcription, TFIIH has an essential role in transcription initiation. When the pre-initiation complex (PIC) has been established, TFIIH is required for promoter opening and promoter escape. Phosphorylation of the C-terminal tail (CTD) of the largest subunit of RNA polymerase II by the kinase module TFIIK controls the initiation of transcription. This is General transcription and DNA repair factor IIH subunit tcf-29 (tcf-29) from Neurospora crassa (strain ATCC 24698 / 74-OR23-1A / CBS 708.71 / DSM 1257 / FGSC 987).